Here is a 118-residue protein sequence, read N- to C-terminus: Aspartate 1-decarboxylase (118 aa).

Residue Ser-25 is the Schiff-base intermediate with substrate; via pyruvic acid of the active site. Residue Ser-25 is modified to Pyruvic acid (Ser). Residue Thr-57 participates in substrate binding. Catalysis depends on Tyr-58, which acts as the Proton donor. Position 73–75 (73–75 (GAA)) interacts with substrate.

The protein belongs to the PanD family. In terms of assembly, heterooctamer of four alpha and four beta subunits. Pyruvate is required as a cofactor. Is synthesized initially as an inactive proenzyme, which is activated by self-cleavage at a specific serine bond to produce a beta-subunit with a hydroxyl group at its C-terminus and an alpha-subunit with a pyruvoyl group at its N-terminus.

It localises to the cytoplasm. The catalysed reaction is L-aspartate + H(+) = beta-alanine + CO2. Its pathway is cofactor biosynthesis; (R)-pantothenate biosynthesis; beta-alanine from L-aspartate: step 1/1. Functionally, catalyzes the pyruvoyl-dependent decarboxylation of aspartate to produce beta-alanine. This Caulobacter vibrioides (strain ATCC 19089 / CIP 103742 / CB 15) (Caulobacter crescentus) protein is Aspartate 1-decarboxylase.